The sequence spans 315 residues: 4-hydroxy-3-methylbut-2-enyl diphosphate reductase (315 aa).

Position 12 (C12) interacts with [4Fe-4S] cluster. (2E)-4-hydroxy-3-methylbut-2-enyl diphosphate is bound by residues H41 and H74. Dimethylallyl diphosphate-binding residues include H41 and H74. H41 and H74 together coordinate isopentenyl diphosphate. C96 contacts [4Fe-4S] cluster. H124 lines the (2E)-4-hydroxy-3-methylbut-2-enyl diphosphate pocket. H124 contacts dimethylallyl diphosphate. H124 serves as a coordination point for isopentenyl diphosphate. The Proton donor role is filled by E126. T168 is a (2E)-4-hydroxy-3-methylbut-2-enyl diphosphate binding site. C198 contributes to the [4Fe-4S] cluster binding site. S226, S227, N228, and S270 together coordinate (2E)-4-hydroxy-3-methylbut-2-enyl diphosphate. Residues S226, S227, N228, and S270 each coordinate dimethylallyl diphosphate. Isopentenyl diphosphate-binding residues include S226, S227, N228, and S270.

The protein belongs to the IspH family. It depends on [4Fe-4S] cluster as a cofactor.

The enzyme catalyses isopentenyl diphosphate + 2 oxidized [2Fe-2S]-[ferredoxin] + H2O = (2E)-4-hydroxy-3-methylbut-2-enyl diphosphate + 2 reduced [2Fe-2S]-[ferredoxin] + 2 H(+). The catalysed reaction is dimethylallyl diphosphate + 2 oxidized [2Fe-2S]-[ferredoxin] + H2O = (2E)-4-hydroxy-3-methylbut-2-enyl diphosphate + 2 reduced [2Fe-2S]-[ferredoxin] + 2 H(+). The protein operates within isoprenoid biosynthesis; dimethylallyl diphosphate biosynthesis; dimethylallyl diphosphate from (2E)-4-hydroxy-3-methylbutenyl diphosphate: step 1/1. Its pathway is isoprenoid biosynthesis; isopentenyl diphosphate biosynthesis via DXP pathway; isopentenyl diphosphate from 1-deoxy-D-xylulose 5-phosphate: step 6/6. In terms of biological role, catalyzes the conversion of 1-hydroxy-2-methyl-2-(E)-butenyl 4-diphosphate (HMBPP) into a mixture of isopentenyl diphosphate (IPP) and dimethylallyl diphosphate (DMAPP). Acts in the terminal step of the DOXP/MEP pathway for isoprenoid precursor biosynthesis. The protein is 4-hydroxy-3-methylbut-2-enyl diphosphate reductase of Pseudomonas entomophila (strain L48).